The chain runs to 137 residues: Large ribosomal subunit protein uL16 (137 aa).

The protein belongs to the universal ribosomal protein uL16 family. In terms of assembly, part of the 50S ribosomal subunit.

In terms of biological role, binds 23S rRNA and is also seen to make contacts with the A and possibly P site tRNAs. This is Large ribosomal subunit protein uL16 from Streptococcus pyogenes serotype M1.